The sequence spans 188 residues: Pallidipin (188 aa).

A signal peptide spans 1 to 18 (MKVIIAATLLGILMHAFA). Cystine bridges form between cysteine 21/cysteine 137, cysteine 55/cysteine 184, and cysteine 89/cysteine 105.

The protein belongs to the calycin superfamily. Triabin family. In terms of tissue distribution, expressed in salivary glands.

It localises to the secreted. Its function is as follows. Has been described as a specific inhibitor of collagen-induced platelet aggregation. However, as it does not affect platelet shape change or adhesion, it is plausible that it exerts its antiplatelet activity by a mechanism similar to that of triplatin, moubatin and dipetalodipin as scavenging eicosanoids involved in inflammation such as thromboxane A2 (TXA2). In Meccus pallidipennis (Triatomine bug), this protein is Pallidipin.